A 218-amino-acid polypeptide reads, in one-letter code: MGQKINPLGFRLGTTQSHHCLWFAQPKNYSGGLQEDEKIRDCIKNYVQKHMRVSSGFEGIARIGIQKKIDLIQVIIHIGFPHFLIEGRARGIEELQINVQKKLNSVNRRLNIAITRVAKPYGQPTILAEYIALQLKNRVSFRKAMKKAIELTEQADTKGIQVQISGRINGKEIARVEWIREGRVPLQTIRAKIDHCSYAVRTIYGVLGIKIWIFLDEE.

A KH type-2 domain is found at 47–118; the sequence is VQKHMRVSSG…RLNIAITRVA (72 aa).

The protein belongs to the universal ribosomal protein uS3 family. As to quaternary structure, part of the 30S ribosomal subunit.

The protein localises to the plastid. It is found in the chloroplast. This is Small ribosomal subunit protein uS3c (rps3) from Illicium oligandrum (Star anise).